The primary structure comprises 145 residues: Hemoglobin subunit beta (145 aa).

One can recognise a Globin domain in the interval 1–145; it reads MLTAEEKAAV…VANALAHRYH (145 aa). T11 is subject to Phosphothreonine. S43 is modified (phosphoserine). K58 bears the N6-acetyllysine mark. H62 contacts heme b. K81 carries the N6-acetyllysine modification. H91 serves as a coordination point for heme b. S-nitrosocysteine is present on C92.

This sequence belongs to the globin family. In terms of assembly, heterotetramer of two alpha chains and two beta chains. In terms of tissue distribution, red blood cells.

In terms of biological role, involved in oxygen transport from the lung to the various peripheral tissues. This is Hemoglobin subunit beta (HBB) from Bos gaurus frontalis (Domestic gayal).